The primary structure comprises 144 residues: uncharacterized protein (144 aa).

This is an uncharacterized protein from Methanocaldococcus jannaschii (strain ATCC 43067 / DSM 2661 / JAL-1 / JCM 10045 / NBRC 100440) (Methanococcus jannaschii).